A 109-amino-acid chain; its full sequence is Iron-sulfur cluster assembly protein CyaY (109 aa).

It belongs to the frataxin family.

Involved in iron-sulfur (Fe-S) cluster assembly. May act as a regulator of Fe-S biogenesis. The chain is Iron-sulfur cluster assembly protein CyaY from Shewanella putrefaciens (strain CN-32 / ATCC BAA-453).